The primary structure comprises 470 residues: Neuronal acetylcholine receptor subunit beta-4 (470 aa).

An N-terminal signal peptide occupies residues 1–3; that stretch reads STA. Residues 4-216 lie on the Extracellular side of the membrane; the sequence is ADAEEKLMNH…IIKRKPLFYT (213 aa). N-linked (GlcNAc...) asparagine glycans are attached at residues Asn29, Asn118, and Asn146. Cys133 and Cys147 are disulfide-bonded. Residues 217–237 traverse the membrane as a helical segment; it reads INLIIPCVLITSLAILVFYLP. Residues 238–245 lie on the Cytoplasmic side of the membrane; that stretch reads SDCGEKMT. Glu242 is a Na(+) binding site. The helical transmembrane segment at 246 to 266 threads the bilayer; sequence LCISVLLALTVFLLLISKIVP. At 267 to 278 the chain is on the extracellular side; the sequence is PTSLDVPLIGKY. The chain crosses the membrane as a helical span at residues 279-299; it reads LMFTMVLVTFSIVTSVCVLNV. Topologically, residues 300–438 are cytoplasmic; it reads HHRSPSTHTM…WKYVAMVVDR (139 aa). The chain crosses the membrane as a helical span at residues 439–459; that stretch reads LFLWIFVLVCVLGTVGLFLQP. At 460–470 the chain is on the extracellular side; the sequence is LFQNHIAATNP.

It belongs to the ligand-gated ion channel (TC 1.A.9) family. Acetylcholine receptor (TC 1.A.9.1) subfamily. Beta-4/CHRNB4 sub-subfamily. In terms of assembly, neuronal AChR is composed of two different types of subunits: alpha and beta. CHRNB4/Beta-4 subunit can be combined to CHRNA2/alpha-2, CHRNA3/alpha-3 or CHRNA4/alpha-4, CHRNA5/alpha-5 and CHRNB3/beta-3 to give rise to functional receptors.

It is found in the synaptic cell membrane. Its subcellular location is the cell membrane. The enzyme catalyses Ca(2+)(in) = Ca(2+)(out). It carries out the reaction K(+)(in) = K(+)(out). The catalysed reaction is Na(+)(in) = Na(+)(out). Its activity is regulated as follows. Activated by a myriad of ligands such as acetylcholine, cytisine, nicotine, choline and epibatidine. The heteropentamer CHRNA3:CHRNB4 activity is blocked by the alpha-conotoxin ImI and AuIB. In terms of biological role, component of neuronal acetylcholine receptors (nAChRs) that function as pentameric, ligand-gated cation channels with high calcium permeability among other activities. nAChRs are excitatory neurotrasnmitter receptors formed by a collection of nAChR subunits known to mediate synaptic transmission in the nervous system and the neuromuscular junction. Each nAchR subunit confers differential attributes to channel properties, including activation, deactivation and desensitization kinetics, pH sensitivity, cation permeability, and binding to allosteric modulators. CHRNB4 forms heteropentameric neuronal acetylcholine receptors with CHRNA2, CHRNA3 and CHRNA4, as well as CHRNA5 and CHRNB3 as accesory subunits. CHRNA3:CHRNB4 being predominant in neurons of the autonomic ganglia, it is known as ganglionic nicotinic receptor. CHRNA3:CHRNB4 or CHRNA3:CHRNA5:CHRNB4 play also an important role in the habenulo-interpeduncular tract, modulating the mesolimbic dopamine system and affecting reward circuits and addiction. Hypothalamic CHRNA3:CHRNB4 nAChR activation by nicotine leads to activation of POMC neurons and a decrease in food intake. The protein is Neuronal acetylcholine receptor subunit beta-4 (CHRNB4) of Gallus gallus (Chicken).